We begin with the raw amino-acid sequence, 505 residues long: Putative pentatricopeptide repeat-containing protein At1g26500 (505 aa).

7 PPR repeats span residues 145-179 (NDKTFRIVLKTLASARELKKCVNYFHLMNGFGYLY), 180-210 (NVETMNRGVETLCKEKLVEEAKFVFIKLKEF), 214-248 (DEITYRTMIQGFCDVGDLIEAAKLWNLMMDEGFDV), 249-279 (DIEAGKKIMETLLKKNQFDEASKVFYVMVSK), 285-319 (DGGFYRVMIDWLCKNGRIDMARKVFDEMRERGVYV), 320-350 (DNLTWASLIYGLLVKRRVVEAYGLVEGVENP), and 351-385 (DISIYHGLIKGLVKIKRASEATEVFRKMIQRGCEP).

It belongs to the PPR family. P subfamily.

In Arabidopsis thaliana (Mouse-ear cress), this protein is Putative pentatricopeptide repeat-containing protein At1g26500.